We begin with the raw amino-acid sequence, 699 residues long: Endogenous retrovirus group K member 113 Env polyprotein (699 aa).

The disordered stretch occupies residues 1–47 (MNPSEMQRKAPPRRRRHRNRAPLTHKMNKMVTSEEQMKLPSTKKAEP). Positions 1–89 (MNPSEMQRKA…ALMIVSMVVS (89 aa)) are cleaved as a signal peptide. A compositionally biased stretch (basic residues) spans 10–20 (APPRRRRHRNR). The Extracellular segment spans residues 90 to 632 (LPMPAGAAAA…NLNPVTWVKT (543 aa)). N-linked (GlcNAc...) asparagine glycosylation is found at asparagine 100, asparagine 128, asparagine 153, asparagine 274, asparagine 355, asparagine 372, and asparagine 461. Positions 466–486 (FIFTLIAVIMGLIAVTATAAV) are fusion peptide. N-linked (GlcNAc...) asparagine glycans are attached at residues asparagine 507, asparagine 554, asparagine 566, and asparagine 585. The helical transmembrane segment at 633–653 (IGSTTIINLILILVCLFCLLL) threads the bilayer. The Cytoplasmic segment spans residues 654–699 (VCRCTQQLRRDSDHRERAMMTMAVLSKRKGGNVGKSKRDQIVTVSV).

This sequence belongs to the beta type-B retroviral envelope protein family. HERV class-II K(HML-2) env subfamily. The surface (SU) and transmembrane (TM) proteins form a heterodimer. SU and TM are attached by noncovalent interactions or by a labile interchain disulfide bond. In terms of processing, specific enzymatic cleavages in vivo yield the mature SU and TM proteins.

The protein localises to the cell membrane. It localises to the virion. Retroviral envelope proteins mediate receptor recognition and membrane fusion during early infection. Endogenous envelope proteins may have kept, lost or modified their original function during evolution. This endogenous envelope protein has lost its original fusogenic properties. In terms of biological role, SU mediates receptor recognition. Functionally, TM anchors the envelope heterodimer to the viral membrane through one transmembrane domain. The other hydrophobic domain, called fusion peptide, mediates fusion of the viral membrane with the target cell membrane. This Homo sapiens (Human) protein is Endogenous retrovirus group K member 113 Env polyprotein (HERVK_113).